The sequence spans 278 residues: Orotidine 5'-phosphate decarboxylase (278 aa).

Substrate-binding positions include Asp-40, 62–64 (KTH), 93–102 (DRKFIDIGNT), Tyr-229, and Arg-247. Lys-95 functions as the Proton donor in the catalytic mechanism.

Belongs to the OMP decarboxylase family.

It carries out the reaction orotidine 5'-phosphate + H(+) = UMP + CO2. It functions in the pathway pyrimidine metabolism; UMP biosynthesis via de novo pathway; UMP from orotate: step 2/2. This is Orotidine 5'-phosphate decarboxylase (pyrG) from Aspergillus fumigatus (strain ATCC MYA-4609 / CBS 101355 / FGSC A1100 / Af293) (Neosartorya fumigata).